The sequence spans 455 residues: Probable transcription factor GLK1 (455 aa).

The span at 145–163 (AAVEAKSSSPSSTTSSSQE) shows a compositional bias: low complexity. A disordered region spans residues 145 to 183 (AAVEAKSSSPSSTTSSSQEAESRHKSSSKSSHGKKKAKV). Basic residues predominate over residues 169-181 (KSSSKSSHGKKKA). The region spanning 177–236 (GKKKAKVDWTPELHRRFVQAVEQLGIDKAVPSRILEIMGIDSLTRHNIASHLQKYRSHRK) is the HTH myb-type domain. Residues 207-232 (PSRILEIMGIDSLTRHNIASHLQKYR) constitute a DNA-binding region (H-T-H motif).

As to expression, expressed in leaves.

It localises to the nucleus. Probable transcriptional activator that promotes chloroplast development. Acts as an activator of nuclear photosynthetic genes involved in chlorophyll biosynthesis, light harvesting, and electron transport. The sequence is that of Probable transcription factor GLK1 (GLK1) from Oryza sativa subsp. japonica (Rice).